Reading from the N-terminus, the 866-residue chain is Probable beta-glucosidase F (866 aa).

Residues 1–20 form the signal peptide; that stretch reads MAAFPAYLALLSYLVPGALS. 3 N-linked (GlcNAc...) asparagine glycosylation sites follow: asparagine 65, asparagine 73, and asparagine 257. Aspartate 285 is an active-site residue. 8 N-linked (GlcNAc...) asparagine glycosylation sites follow: asparagine 328, asparagine 360, asparagine 395, asparagine 421, asparagine 474, asparagine 659, asparagine 664, and asparagine 724. The tract at residues 725–748 is disordered; sequence SSKTYPYPDGYTTEPKPAPRAGGA.

It belongs to the glycosyl hydrolase 3 family.

It is found in the secreted. It carries out the reaction Hydrolysis of terminal, non-reducing beta-D-glucosyl residues with release of beta-D-glucose.. It participates in glycan metabolism; cellulose degradation. Beta-glucosidases are one of a number of cellulolytic enzymes involved in the degradation of cellulosic biomass. Catalyzes the last step releasing glucose from the inhibitory cellobiose. This Aspergillus flavus (strain ATCC 200026 / FGSC A1120 / IAM 13836 / NRRL 3357 / JCM 12722 / SRRC 167) protein is Probable beta-glucosidase F (bglF).